A 352-amino-acid chain; its full sequence is Leukotriene B4 receptor 1 (352 aa).

At 1–19 the chain is on the extracellular side; sequence MNTTSSAAPPSLGVEFISL. Residue N2 is glycosylated (N-linked (GlcNAc...) asparagine). Residues 20–42 form a helical membrane-spanning segment; that stretch reads LAIILLSVALAVGLPGNSFVVWS. The Cytoplasmic segment spans residues 43 to 54; that stretch reads ILKRMQKRSVTA. The chain crosses the membrane as a helical span at residues 55–75; it reads LMVLNLALADLAVLLTAPFFL. At 76-91 the chain is on the extracellular side; the sequence is HFLAQGTWSFGLAGCR. The chain crosses the membrane as a helical span at residues 92 to 113; sequence LCHYVCGVSMYASVLLITAMSL. At 114-138 the chain is on the cytoplasmic side; the sequence is DRSLAVARPFVSQKLRTKAMARRVL. A helical transmembrane segment spans residues 139–159; the sequence is AGIWVLSFLLATPVLAYRTVV. Topologically, residues 160-178 are extracellular; it reads PWKTNMSLCFPRYPSEGHR. N164 carries N-linked (GlcNAc...) asparagine glycosylation. The chain crosses the membrane as a helical span at residues 179–199; sequence AFHLIFEAVTGFLLPFLAVVA. Over 200-221 the chain is Cytoplasmic; it reads SYSDIGRRLQARRFRRSRRTGR. The helical transmembrane segment at 222–242 threads the bilayer; sequence LVVLIILTFAAFWLPYHVVNL. Topologically, residues 243–268 are extracellular; that stretch reads AEAGRALAGQAAGLGLVGKRLSLARN. Residues 269–289 form a helical membrane-spanning segment; it reads VLIALAFLSSSVNPVLYACAG. The Cytoplasmic segment spans residues 290 to 352; that stretch reads GGLLRSAGVG…SSPLKLNELN (63 aa). Polar residues-rich tracts occupy residues 310–326 and 338–352; these read SEAS…QTAR and ESLT…NELN. Residues 310–352 are disordered; the sequence is SEASSTRRGGSLGQTARSGPAALEPGPSESLTASSPLKLNELN.

This sequence belongs to the G-protein coupled receptor 1 family. Phosphorylated by GRK6 upon leukotriene B4 binding; which promotes desensitization. As to expression, expressed at highest levels in heart, skeletal muscle and at lower levels in brain and liver. High level of expression in lymphoid tissues.

It localises to the cell membrane. Receptor for extracellular ATP &gt; UTP and ADP. The activity of this receptor is mediated by G proteins which activate a phosphatidylinositol-calcium second messenger system. May be the cardiac P2Y receptor involved in the regulation of cardiac muscle contraction through modulation of L-type calcium currents. Is a receptor for leukotriene B4, a potent chemoattractant involved in inflammation and immune response. This chain is Leukotriene B4 receptor 1 (LTB4R), found in Homo sapiens (Human).